The following is a 139-amino-acid chain: Endocuticle structural glycoprotein SgAbd-8 (139 aa).

At glutamine 1 the chain carries Pyrrolidone carboxylic acid. Threonine 14 carries an O-linked (HexNAc...) threonine glycan. Serine 15 is a glycosylation site (O-linked (HexNAc...) serine). The Chitin-binding type R&amp;R domain occupies 29 to 99 (DGSYAWSYET…PEGAHLPTPP (71 aa)). O-linked (HexNAc...) threonine glycosylation occurs at threonine 97. The disordered stretch occupies residues 111–139 (FIASQPQQPGNNGGGQFPRPQPFPRPGAF). Over residues 129–139 (RPQPFPRPGAF) the composition is skewed to pro residues.

Functionally, component of the abdominal endocuticle. The sequence is that of Endocuticle structural glycoprotein SgAbd-8 from Schistocerca gregaria (Desert locust).